The following is a 313-amino-acid chain: uncharacterized protein (313 aa).

The N-acetyltransferase domain occupies 6-152; it reads YDILENPEPN…YHASMEKMTG (147 aa).

In terms of biological role, to the C-terminal of C.elegans F21C10.9. This is an uncharacterized protein from Caenorhabditis elegans.